The following is a 251-amino-acid chain: uncharacterized protein (251 aa).

Belongs to the FAM243 family.

This is an uncharacterized protein from Homo sapiens (Human).